A 267-amino-acid chain; its full sequence is Phosphate import ATP-binding protein PstB (267 aa).

Positions 21-262 (IAIRNLEFYY…PSKQQTEDYI (242 aa)) constitute an ABC transporter domain. 53 to 60 (GPSGCGKS) serves as a coordination point for ATP.

Belongs to the ABC transporter superfamily. Phosphate importer (TC 3.A.1.7) family. The complex is composed of two ATP-binding proteins (PstB), two transmembrane proteins (PstC and PstA) and a solute-binding protein (PstS).

Its subcellular location is the cell inner membrane. The catalysed reaction is phosphate(out) + ATP + H2O = ADP + 2 phosphate(in) + H(+). In terms of biological role, part of the ABC transporter complex PstSACB involved in phosphate import. Responsible for energy coupling to the transport system. In Xylella fastidiosa (strain 9a5c), this protein is Phosphate import ATP-binding protein PstB.